The sequence spans 290 residues: Short neuropeptide F (290 aa).

A signal peptide spans 1–32 (MFRFNPQLSHGCALALICCLLNLLMMHQPTNA). Positions 33-87 (ELSPVVQGEFFLPILPDDHPPNTDTSFGGPISNLYDNLLQREYAGPVVFPNHQVE) are excised as a propeptide. Phenylalanine amide is present on residues Phe100 and Phe134. Positions 138 to 290 (DPTLPQMRRT…IETSSIAPKN (153 aa)) are excised as a propeptide. The interval 238-290 (VAGYANDGDDTEAQLDEDTSEFQREARKPMRLRWGRSTGKAPQIETSSIAPKN) is disordered. Residues 244-257 (DGDDTEAQLDEDTS) are compositionally biased toward acidic residues. Over residues 281-290 (IETSSIAPKN) the composition is skewed to polar residues.

This sequence belongs to the NPY family.

The protein resides in the secreted. In terms of biological role, plays a role in controlling food intake and regulating body size. This Drosophila pseudoobscura pseudoobscura (Fruit fly) protein is Short neuropeptide F.